Reading from the N-terminus, the 444-residue chain is ATP-dependent protease ATPase subunit HslU (444 aa).

Residues Ile18, Gly60 to Glu65, Asp256, Glu322, and Arg394 contribute to the ATP site.

This sequence belongs to the ClpX chaperone family. HslU subfamily. In terms of assembly, a double ring-shaped homohexamer of HslV is capped on each side by a ring-shaped HslU homohexamer. The assembly of the HslU/HslV complex is dependent on binding of ATP.

The protein localises to the cytoplasm. ATPase subunit of a proteasome-like degradation complex; this subunit has chaperone activity. The binding of ATP and its subsequent hydrolysis by HslU are essential for unfolding of protein substrates subsequently hydrolyzed by HslV. HslU recognizes the N-terminal part of its protein substrates and unfolds these before they are guided to HslV for hydrolysis. In Buchnera aphidicola subsp. Cinara cedri (strain Cc), this protein is ATP-dependent protease ATPase subunit HslU.